Reading from the N-terminus, the 126-residue chain is RutC family protein y4sK (126 aa).

Belongs to the RutC family.

The protein is RutC family protein y4sK of Sinorhizobium fredii (strain NBRC 101917 / NGR234).